Consider the following 270-residue polypeptide: Nuclear receptor-interacting protein 2 (270 aa).

Positions 1 to 27 (MSTGQEARRDEGDSRKEQEASLRDRAH) are enriched in basic and acidic residues. The interval 1-33 (MSTGQEARRDEGDSRKEQEASLRDRAHLSQQRQ) is disordered. An interaction with NR1F2 region spans residues 61 to 99 (KDLQPHSVIQRRLVEGNQRRLQGESPLLQALIRGHDSSR). An LXXLL motif motif is present at residues 192 to 196 (LQTLL).

Interacts with NR1F2, RARA and THRB in a ligand-dependent manner. Expression is restricted to the central nervous system (neurons in the dentate gyrus of the hippocampus, the amygdala, thalamic and hypothalamic regions).

Its subcellular location is the nucleus. Its function is as follows. Down-regulates transcriptional activation by nuclear receptors, such as NR1F2. The chain is Nuclear receptor-interacting protein 2 (Nrip2) from Mus musculus (Mouse).